The following is a 107-amino-acid chain: uncharacterized protein (107 aa).

Residues 1-32 form a disordered region; that stretch reads MDSLASGRWRRRRTEELPAAGDAKRACRRSEP. Residues 22 to 31 show a composition bias toward basic and acidic residues; that stretch reads DAKRACRRSE.

This is an uncharacterized protein from Mus musculus (Mouse).